The primary structure comprises 281 residues: MKARKSQRKAGSKPNLIQSKLQVNNGSKSNKIVKCDKCEMSYSSTSIEDRAIHEKYHTLQLHGRKWSPNWGSIVYTERNHSRTVHLSRSTGTITPLNSSPLKKSSPSITHQEEKIVYVRPDKSNGEVRAMTEIMTLVNNELNAPHDENVIWNSTTEEKGKAFVYIRNDRAVGIIIIENLYGGNGKTSSRGRWMVYDSRRLVQNVYPDFKIGISRIWVCRTARKLGIATKLIDVARENIVYGEVIPRYQVAWSQPTDSGGKLASKYNGIMHKSGKLLLPVYI.

A CCHH-type zinc finger spans residues 33–57 (VKCDKCEMSYSSTSIEDRAIHEKYH). A disordered region spans residues 86–105 (LSRSTGTITPLNSSPLKKSS). Over residues 95–105 (PLNSSPLKKSS) the composition is skewed to low complexity. K223 carries the post-translational modification N6-acetyllysine; by autocatalysis.

The protein belongs to the acetyltransferase family. ECO subfamily. In terms of assembly, binds specifically to CHL12, RFC1, RFC2, RFC3, RFC4, RFC5 and RAD24 when members of an RFC complex. Interacts with CHL1 and MPS3. Post-translationally, autoacetylates in vitro.

It localises to the nucleus. In terms of biological role, required for establishment of sister chromatid cohesion during S phase but not for its further maintenance during G2 or M phases or for loading the cohesin complex onto DNA. Interacts with the three known alternate replication factor C (RFC) complexes, suggesting that these complexes have essential but redundant activity in cohesion establishment. Acts by acetylating the cohesin complex component SMC3. In vitro, possesses acetyltransferase activity where it can acetylate itself and components of the cohesin complex (MCD1, IRR1 and PDS5), but is unable to acetylate histones. In Saccharomyces cerevisiae (strain ATCC 204508 / S288c) (Baker's yeast), this protein is N-acetyltransferase ECO1 (ECO1).